The sequence spans 440 residues: DNA polymerase delta small subunit (440 aa).

It belongs to the DNA polymerase delta/II small subunit family. In terms of assembly, heterodimer with subunits of 125 kDa and 50 kDa.

It localises to the nucleus. It carries out the reaction DNA(n) + a 2'-deoxyribonucleoside 5'-triphosphate = DNA(n+1) + diphosphate. The function of the small subunit is not yet clear. The polypeptide is DNA polymerase delta small subunit (POLD2) (Arabidopsis thaliana (Mouse-ear cress)).